Reading from the N-terminus, the 104-residue chain is Large ribosomal subunit protein uL24 (104 aa).

The protein belongs to the universal ribosomal protein uL24 family. As to quaternary structure, part of the 50S ribosomal subunit.

In terms of biological role, one of two assembly initiator proteins, it binds directly to the 5'-end of the 23S rRNA, where it nucleates assembly of the 50S subunit. Functionally, one of the proteins that surrounds the polypeptide exit tunnel on the outside of the subunit. The polypeptide is Large ribosomal subunit protein uL24 (Buchnera aphidicola subsp. Acyrthosiphon pisum (strain 5A)).